Reading from the N-terminus, the 123-residue chain is Heat-labile enterotoxin IIA, B chain (123 aa).

A signal peptide spans Met-1–Gly-19. An intrachain disulfide couples Cys-33 to Cys-104.

As to quaternary structure, heterohexamer of one A chain and of five B chains.

Its function is as follows. The biological activity of the toxin is produced by the A chain, which activates intracellular adenyl cyclase. In Escherichia coli, this protein is Heat-labile enterotoxin IIA, B chain.